A 316-amino-acid polypeptide reads, in one-letter code: Acetaldehyde dehydrogenase (316 aa).

An NAD(+)-binding site is contributed by 11-14; sequence SGNI. C131 serves as the catalytic Acyl-thioester intermediate. Residues 162–170 and N289 contribute to the NAD(+) site; that span reads SAGPGTRAN.

It belongs to the acetaldehyde dehydrogenase family. Interacts with MhpE.

It carries out the reaction acetaldehyde + NAD(+) + CoA = acetyl-CoA + NADH + H(+). It functions in the pathway aromatic compound metabolism; 3-phenylpropanoate degradation. Functionally, catalyzes the conversion of acetaldehyde to acetyl-CoA, using NAD(+) and coenzyme A. Is the final enzyme in the meta-cleavage pathway for the degradation of aromatic compounds. The polypeptide is Acetaldehyde dehydrogenase (Klebsiella pneumoniae subsp. pneumoniae (strain ATCC 700721 / MGH 78578)).